An 89-amino-acid polypeptide reads, in one-letter code: NLVTDLYVKELKAFKPTPASAADAEAATKPWKLPQAAKVPSLEGEGADALAEYDSAKVEVVEASGETAAEEYNPDDWFVFEEEEEPGHH.

In terms of assembly, F-type ATP synthases have 2 components, the catalytic core F(1) and the membrane-embedded component F(0), linked together by a central stalk and a peripheral stalk. The central stalk, also called rotor shaft, is often seen as part of F(1). The peripheral stalk is seen as part of F(0). F(0) contains the membrane channel next to the rotor. F-type ATP synthases form dimers but each monomer functions independently in ATP generation. The dimer consists of 18 different polypeptides: ATP1 (subunit alpha, part of F(1), 3 molecules per monomer), ATP2 (subunit beta, part of F(1), 3 molecules per monomer), ATP3 (subunit gamma, part of the central stalk), ATP4 (subunit b, part of the peripheral stalk), ATP5/OSCP (subunit 5/OSCP, part of the peripheral stalk), ATP6 (subunit a, part of the peripheral stalk), ATP7 (subunit d, part of the peripheral stalk), ATP8 (subunit 8, part of the peripheral stalk), OLI1 (subunit c, part of the rotor, 10 molecules per monomer), ATP14 (subunit H, part of the peripheral stalk), ATP15 (subunit epsilon, part of the central stalk), ATP16 (subunit delta, part of the central stalk), ATP17 (subunit f, part of the peripheral stalk), ATP18 (subunit i/j, part of the peripheral stalk). Dimer-specific subunits are ATP19 (subunit k, at interface between monomers), ATP20 (subunit g, at interface between monomers), TIM11 (subunit e, at interface between monomers). Also contains subunit L.

It localises to the mitochondrion inner membrane. Its function is as follows. Mitochondrial membrane ATP synthase (F(1)F(0) ATP synthase or Complex V) produces ATP from ADP in the presence of a proton gradient across the membrane which is generated by electron transport complexes of the respiratory chain. F-type ATP synthases consist of two structural domains, F(1) - containing the extramembraneous catalytic core, and F(0) - containing the membrane proton channel, linked together by a central stalk and a peripheral stalk. During catalysis, ATP synthesis in the catalytic domain of F(1) is coupled via a rotary mechanism of the central stalk subunits to proton translocation. Part of the peripheral stalk. The protein is ATP synthase subunit H, mitochondrial of Pichia angusta (Yeast).